The sequence spans 985 residues: Protein psiQ (985 aa).

The first 20 residues, 1-20, serve as a signal peptide directing secretion; it reads MMKYIYILLIFSLLFLKINS. In terms of domain architecture, PA14 spans 102 to 247; sequence QSTTNPNVYA…YDECGVCQGD (146 aa). N-linked (GlcNAc...) asparagine glycans are attached at residues asparagine 127, asparagine 309, asparagine 424, asparagine 491, asparagine 517, asparagine 527, asparagine 592, asparagine 620, asparagine 649, asparagine 696, asparagine 735, asparagine 767, asparagine 786, asparagine 824, and asparagine 842.

The protein belongs to the prespore-cell-inducing factor family.

Its subcellular location is the secreted. This is Protein psiQ (psiQ) from Dictyostelium discoideum (Social amoeba).